The primary structure comprises 76 residues: Exodeoxyribonuclease 7 small subunit (76 aa).

Belongs to the XseB family. Heterooligomer composed of large and small subunits.

The protein localises to the cytoplasm. It catalyses the reaction Exonucleolytic cleavage in either 5'- to 3'- or 3'- to 5'-direction to yield nucleoside 5'-phosphates.. In terms of biological role, bidirectionally degrades single-stranded DNA into large acid-insoluble oligonucleotides, which are then degraded further into small acid-soluble oligonucleotides. The chain is Exodeoxyribonuclease 7 small subunit from Geotalea uraniireducens (strain Rf4) (Geobacter uraniireducens).